Reading from the N-terminus, the 184-residue chain is ATP synthase subunit b, chloroplastic (184 aa).

Residues 27-49 traverse the membrane as a helical segment; that stretch reads LATNLINLSVVLGVLIFFGKGVL.

This sequence belongs to the ATPase B chain family. As to quaternary structure, F-type ATPases have 2 components, F(1) - the catalytic core - and F(0) - the membrane proton channel. F(1) has five subunits: alpha(3), beta(3), gamma(1), delta(1), epsilon(1). F(0) has four main subunits: a(1), b(1), b'(1) and c(10-14). The alpha and beta chains form an alternating ring which encloses part of the gamma chain. F(1) is attached to F(0) by a central stalk formed by the gamma and epsilon chains, while a peripheral stalk is formed by the delta, b and b' chains.

The protein localises to the plastid. The protein resides in the chloroplast thylakoid membrane. F(1)F(0) ATP synthase produces ATP from ADP in the presence of a proton or sodium gradient. F-type ATPases consist of two structural domains, F(1) containing the extramembraneous catalytic core and F(0) containing the membrane proton channel, linked together by a central stalk and a peripheral stalk. During catalysis, ATP synthesis in the catalytic domain of F(1) is coupled via a rotary mechanism of the central stalk subunits to proton translocation. In terms of biological role, component of the F(0) channel, it forms part of the peripheral stalk, linking F(1) to F(0). The sequence is that of ATP synthase subunit b, chloroplastic from Manihot esculenta (Cassava).